The following is a 240-amino-acid chain: 2,3,4,5-tetrahydropyridine-2,6-dicarboxylate N-acetyltransferase (240 aa).

Belongs to the transferase hexapeptide repeat family. DapH subfamily.

The catalysed reaction is (S)-2,3,4,5-tetrahydrodipicolinate + acetyl-CoA + H2O = L-2-acetamido-6-oxoheptanedioate + CoA. The protein operates within amino-acid biosynthesis; L-lysine biosynthesis via DAP pathway; LL-2,6-diaminopimelate from (S)-tetrahydrodipicolinate (acetylase route): step 1/3. Functionally, catalyzes the transfer of an acetyl group from acetyl-CoA to tetrahydrodipicolinate. The chain is 2,3,4,5-tetrahydropyridine-2,6-dicarboxylate N-acetyltransferase from Halalkalibacterium halodurans (strain ATCC BAA-125 / DSM 18197 / FERM 7344 / JCM 9153 / C-125) (Bacillus halodurans).